The chain runs to 174 residues: Peptide methionine sulfoxide reductase MsrA (174 aa).

Cysteine 10 is a catalytic residue.

The protein belongs to the MsrA Met sulfoxide reductase family.

It carries out the reaction L-methionyl-[protein] + [thioredoxin]-disulfide + H2O = L-methionyl-(S)-S-oxide-[protein] + [thioredoxin]-dithiol. The enzyme catalyses [thioredoxin]-disulfide + L-methionine + H2O = L-methionine (S)-S-oxide + [thioredoxin]-dithiol. Functionally, has an important function as a repair enzyme for proteins that have been inactivated by oxidation. Catalyzes the reversible oxidation-reduction of methionine sulfoxide in proteins to methionine. The chain is Peptide methionine sulfoxide reductase MsrA from Acinetobacter baumannii (strain SDF).